The sequence spans 1887 residues: MIFQSFLLGNLVSLCMKIINSVVVVGLYYGFLTTFSIGPSYLFLLRALVMEEGTEKKVSATTGFITGQLMMFISIYYAPLHLALGRPHTITVLALPYLLFHFFWNNHKHFFDYGSTTRNSMRNLSIQCVFLNNLIFQLFNHFILPSSMLARLVNIYLFRCNNKILFVTSGFVGWLIGHILFMKWLGLVLVWIRQNHSIRSNKYIRSNKYLVLELRNSMARIFSILLFITCVYYLGRIPSPILTKKLKEASKTEERVESEEERDVEIETASEMKGTKQEQEGSTEEDPYPSPSLFSEEGWDPDKIDETEEIRVNGKDKIKDKFHSHLTETGYNNINTSNSPIYDYQDSYLNNNNTGNLENLKLQLLDKKNENQDLFWFQKPLVSLLFDYNRWNRPFRYIKNNRFEQAVRTEMSQYFFDTCKSDGKQRISFTYPPSLSTFWKMIKRKIPLLSLQKTLPNELDTQWVSTNKEKSNNLNKEFLNRLEILAKESLSMDILETRTRLCNDDTKKEYVPKMYDPLLNGPYRGTIKKGVSSSIINNTLLENWEKRVRLNRIHTIFLPNMDYQEFEQKAYTIDKKPLSTEIDEFLTLINELGNEPKSSLNLKGLSLFSDQEQRRVNSEKRTKFVKFVFNAIDPNETKSGKKSIGIKEISKKVPRWSHKLITELDQQMGEFQDRASIDHQLRSRKAKRVVIFTDNNATNDPEEEVALISYSQQSDFRRGIIKGSMRAQRRKTFISKLFQANVHSPLFVDRITPLRLFSFDISELIKPIFRNWTGKEGEFKILESREEQTKREEKKEKDKKEDNKRKEQARIAIEEAWDNIPFAQIIRGYMLITQSILRKYILLPSLIIAKNLGRMLFLQLPEWSEDLQEWNREMQIKCTYNGVQLSETEFPKDWLRDGIQIKILFPFCLKPWHISKLYPSRGELMKKQKQKDDFCFLTVWGMEAELPFGSPRKRPSFFEPIFKELEKKIGKLKKKYFLTLKIFKGKTKLFRRVSKETKKWFIKSIGFLKKIKKELSKVNPIVLFRFKEISESNETKKEKDYLISNQIINESFSQIESGNWPNSSLIETKMKDLTDRTSTIKNQIERITKDKKKVTPEIDINPNKTNNIKKLESPKKFFQILQRRNTRVIWKFHYFLKLFIQRLYIDLFLSIINIPRITTQLFLESTNKLIEKFISNNEINQEKITNKKKIHFIFISTIKKSLYNISKKNSHIFCDLSYLSQAYVFYKLSQTQVINLSKFRSVLQYNTTSCFLKTKIKDYFKTLGIFHSELKHKKLQSYRINQWKNWLRWHYQYDLSQIRWSRLMPKKWRTKVNQSCMAKNKNRNLNKWNSYEKDQLIHYKKENDSELYSLSNQKDNFKKCYRYGLLAYKSINYENKSDSFFSRLPFQVKKNLEISYNSNTSKHNFVDMPGNLHINNYLRKVNILDIERNLDRKYFDWKIIHFSLRQKGDIEAWVKIDTNSNPNTKIGINNYQIIDKIEKKGVFYLTTHQNPEKTQKNSKKVFFDWMGMNEKIFNRPILNLEFWFFPEFVLLYNVYKIKPWIIPSKFLLFNLNTNENVIQNKNQKQNFFLPSNKKIKNRSQETKEPPSQRERGSDIENKGNLSPVFSKHQTDLEKDYVESDTKKGQNKKQYKSNTEAELDLFLKRYLLFQLRWNDALNKRMLENIKVYCLLLRLINPTKITISSIQRREMSLDIMLIQANLPLTDLMKKGVLIIEPIRLSVKHNGQFIMYQTIGISLVHKSKHQTNQRYREQRYVDKKNFDEFILQPQTQRINTEKTHFDLLVPENILWSRRRRELRIRSFFNSLNWNVVDRNSVFCNETNVKNWSQFLGERKPLYKDKKKLIKFKFFLWPNYRLEDLACMNRYWFDTNNGSRFSILRIHMYPRLKIN.

The next 6 membrane-spanning stretches (helical) occupy residues 18–38, 64–84, 87–107, 124–144, 172–192, and 221–241; these read IINS…FSIG, FITG…HLAL, PHTI…WNNH, LSIQ…HFIL, VGWL…LVWI, and IFSI…PSPI. 3 disordered regions span residues 248–300, 785–805, and 1569–1603; these read EASK…EGWD, REEQ…DNKR, and LPSN…NLSP. Positions 256–268 are enriched in acidic residues; that stretch reads VESEEERDVEIET. A compositionally biased stretch (basic and acidic residues) spans 1578–1597; it reads RSQETKEPPSQRERGSDIEN.

Belongs to the TIC214 family. As to quaternary structure, part of the Tic complex.

It localises to the plastid. It is found in the chloroplast inner membrane. Its function is as follows. Involved in protein precursor import into chloroplasts. May be part of an intermediate translocation complex acting as a protein-conducting channel at the inner envelope. This chain is Protein TIC 214, found in Solanum tuberosum (Potato).